Reading from the N-terminus, the 511-residue chain is MRWISRPGWPGHLLALAAGALTPLALAPFDYWPLAILSIALLYLGLRGLPGKSALWRGWWYGFGAFGAGTSWIYVSIHDYGAASVPLASLLMLGFTAGVAFFFALPAWLWARCLRRDNAPLGDALAFAALWLALELFRSWFLTGFPWLYAGYSQLQGPLAGLVPVGGVWLSSFVIALSAALLVNLPRLFPHGASLLLGLVLLLGPWAAGLYLKGHAWTHSAGEPLRVVAIQGNIAQELKWDPNQVRAQLDLYRDLSLPQQDVDLIVWPETAVPILQDMASGYLGAMGQVADEKNAALITGVPVRERLADGKSRYFNGITVVGEGAGTYLKQKLVPFGEYVPLQDLLRGLIAFFDLPMSDFARGPADQPLLKAKGYQIAPYICYEVVYPEFAAALAAQSQVLLTVSNDTWFGTSIGPLQHLQMAQMRALESGRWMIRATNNGVTGLIDPYGRIVRQIPQFQQGILRGEVIPMQGLTPYLQYRVWPLAGLAGVLLLWALLGRQLRPQERRLFG.

Transmembrane regions (helical) follow at residues 7-29, 58-78, 90-110, 125-145, 163-183, and 192-212; these read PGWPGHLLALAAGALTPLALAPF, GWWYGFGAFGAGTSWIYVSIH, LLMLGFTAGVAFFFALPAWLW, LAFAALWLALELFRSWFLTGF, VPVGGVWLSSFVIALSAALLV, and GASLLLGLVLLLGPWAAGLYL. Residues 230–470 enclose the CN hydrolase domain; that stretch reads IQGNIAQELK…QGILRGEVIP (241 aa). Residue Glu-269 is the Proton acceptor of the active site. Lys-330 is a catalytic residue. Catalysis depends on Cys-382, which acts as the Nucleophile. Residues 482–502 form a helical membrane-spanning segment; that stretch reads VWPLAGLAGVLLLWALLGRQL.

The protein belongs to the CN hydrolase family. Apolipoprotein N-acyltransferase subfamily.

Its subcellular location is the cell inner membrane. The enzyme catalyses N-terminal S-1,2-diacyl-sn-glyceryl-L-cysteinyl-[lipoprotein] + a glycerophospholipid = N-acyl-S-1,2-diacyl-sn-glyceryl-L-cysteinyl-[lipoprotein] + a 2-acyl-sn-glycero-3-phospholipid + H(+). It participates in protein modification; lipoprotein biosynthesis (N-acyl transfer). Its function is as follows. Catalyzes the phospholipid dependent N-acylation of the N-terminal cysteine of apolipoprotein, the last step in lipoprotein maturation. This chain is Apolipoprotein N-acyltransferase, found in Pseudomonas aeruginosa (strain ATCC 15692 / DSM 22644 / CIP 104116 / JCM 14847 / LMG 12228 / 1C / PRS 101 / PAO1).